Here is a 126-residue protein sequence, read N- to C-terminus: Small ribosomal subunit protein uS12 (126 aa).

The interval 1–28 (MPTINQLVRKGRRKVRTKSKSPALDGNP) is disordered. Basic residues predominate over residues 9-19 (RKGRRKVRTKS). Asp-89 bears the 3-methylthioaspartic acid mark. Residues 106-126 (GVEKRRRSRSKYGVKRPKAAK) form a disordered region. Residues 109–126 (KRRRSRSKYGVKRPKAAK) are compositionally biased toward basic residues.

Belongs to the universal ribosomal protein uS12 family. In terms of assembly, part of the 30S ribosomal subunit. Contacts proteins S8 and S17. May interact with IF1 in the 30S initiation complex.

With S4 and S5 plays an important role in translational accuracy. Functionally, interacts with and stabilizes bases of the 16S rRNA that are involved in tRNA selection in the A site and with the mRNA backbone. Located at the interface of the 30S and 50S subunits, it traverses the body of the 30S subunit contacting proteins on the other side and probably holding the rRNA structure together. The combined cluster of proteins S8, S12 and S17 appears to hold together the shoulder and platform of the 30S subunit. The chain is Small ribosomal subunit protein uS12 from Opitutus terrae (strain DSM 11246 / JCM 15787 / PB90-1).